Here is a 257-residue protein sequence, read N- to C-terminus: Mediator of RNA polymerase II transcription subunit 7 (257 aa).

A disordered region spans residues Glu-33–Arg-74. The segment covering Glu-44 to Glu-63 has biased composition (basic and acidic residues).

It belongs to the Mediator complex subunit 7 family. In terms of assembly, component of the Mediator complex.

It localises to the nucleus. Component of the Mediator complex, a coactivator involved in the regulated transcription of nearly all RNA polymerase II-dependent genes. Mediator functions as a bridge to convey information from gene-specific regulatory proteins to the basal RNA polymerase II transcription machinery. Mediator is recruited to promoters by direct interactions with regulatory proteins and serves as a scaffold for the assembly of a functional preinitiation complex with RNA polymerase II and the general transcription factors. This Scheffersomyces stipitis (strain ATCC 58785 / CBS 6054 / NBRC 10063 / NRRL Y-11545) (Yeast) protein is Mediator of RNA polymerase II transcription subunit 7 (MED7).